A 111-amino-acid polypeptide reads, in one-letter code: Prothymosin alpha-A (111 aa).

The disordered stretch occupies residues 1–111 (MSDTAVDASV…IKKQKTDEDD (111 aa)). Positions 9–42 (SVEKTTKDLKAKEKEVVEEAENGKDKPTNGKAEN) are enriched in basic and acidic residues. 2 stretches are compositionally biased toward acidic residues: residues 43–81 (EENG…DEVE) and 90–100 (EDDEDDDDDDV). Positions 101–111 (EIKKQKTDEDD) are enriched in basic and acidic residues.

Belongs to the pro/parathymosin family.

The protein localises to the nucleus. The protein is Prothymosin alpha-A (ptma-a) of Xenopus laevis (African clawed frog).